We begin with the raw amino-acid sequence, 552 residues long: Small ribosomal subunit protein bS1 (552 aa).

6 S1 motif domains span residues threonine 31 to glutamine 101, asparagine 116 to lysine 179, threonine 200 to lysine 268, glycine 285 to lysine 355, glycine 372 to lysine 440, and aspartate 457 to histidine 521.

This sequence belongs to the bacterial ribosomal protein bS1 family.

In terms of biological role, binds mRNA; thus facilitating recognition of the initiation point. It is needed to translate mRNA with a short Shine-Dalgarno (SD) purine-rich sequence. This is Small ribosomal subunit protein bS1 (rpsA) from Helicobacter pylori (strain J99 / ATCC 700824) (Campylobacter pylori J99).